The sequence spans 513 residues: ATP synthase subunit alpha (513 aa).

169–176 (GDRQTGKT) is a binding site for ATP.

This sequence belongs to the ATPase alpha/beta chains family. F-type ATPases have 2 components, CF(1) - the catalytic core - and CF(0) - the membrane proton channel. CF(1) has five subunits: alpha(3), beta(3), gamma(1), delta(1), epsilon(1). CF(0) has three main subunits: a(1), b(2) and c(9-12). The alpha and beta chains form an alternating ring which encloses part of the gamma chain. CF(1) is attached to CF(0) by a central stalk formed by the gamma and epsilon chains, while a peripheral stalk is formed by the delta and b chains.

It is found in the cell inner membrane. The enzyme catalyses ATP + H2O + 4 H(+)(in) = ADP + phosphate + 5 H(+)(out). Functionally, produces ATP from ADP in the presence of a proton gradient across the membrane. The alpha chain is a regulatory subunit. This is ATP synthase subunit alpha from Nitrosomonas europaea (strain ATCC 19718 / CIP 103999 / KCTC 2705 / NBRC 14298).